The following is a 209-amino-acid chain: Cilia- and flagella-associated protein 418 (209 aa).

Residues 1–76 are required for interaction with FAM161A; that stretch reads MAKDLDELLD…LINEIFEEPD (76 aa). Residues 24–58 are disordered; that stretch reads LDLGERPKGDGGGGSHSGDRNGAQEKETLRSTETF. A compositionally biased stretch (basic and acidic residues) spans 40–58; it reads SGDRNGAQEKETLRSTETF.

As to quaternary structure, interacts (via N-terminus) with FAM161A (via central region); the interaction is direct. Expressed in multiple tissues, including the brain, kidney, lung, spleen, heart, trachea and testis. Expressed in the retina (at protein level).

The protein resides in the cytoplasm. It is found in the photoreceptor inner segment. In terms of biological role, may be involved in photoreceptor outer segment disk morphogenesis. This chain is Cilia- and flagella-associated protein 418, found in Mus musculus (Mouse).